We begin with the raw amino-acid sequence, 227 residues long: Phosphoglycolate phosphatase (227 aa).

Asp-11 (nucleophile) is an active-site residue. 2 residues coordinate Mg(2+): Asp-11 and Asp-13. Residue Lys-155 participates in substrate binding. Residues Asp-178 and Asp-182 each contribute to the Mg(2+) site.

The protein belongs to the archaeal SPP-like hydrolase family. Mg(2+) is required as a cofactor.

The enzyme catalyses 2-phosphoglycolate + H2O = glycolate + phosphate. Functionally, catalyzes the dephosphorylation of 2-phosphoglycolate. This Haloarcula marismortui (strain ATCC 43049 / DSM 3752 / JCM 8966 / VKM B-1809) (Halobacterium marismortui) protein is Phosphoglycolate phosphatase.